A 207-amino-acid chain; its full sequence is Protein Nef (207 aa).

Residue glycine 2 is the site of N-myristoyl glycine; by host attachment. Serine 6 is modified (phosphoserine; by host). Residues 63-66 (EEZE) form an acidic; interacts with host PACS1 and PACS2; stabilizes the interaction of NEF/MHC-I with host AP1M1; necessary for MHC-I internalization region. Residues 70–79 (PVRPQVPLRP) form an SH3-binding; interaction with Src family tyrosine kinases region. Residues 73–76 (PQVP) carry the PxxP; stabilizes the interaction of NEF/MHC-I with host AP1M1; necessary for MHC-I internalization motif. The segment at 109–125 (EILDLWVYHTQGFFPDW) is mediates dimerization, Nef-PTE1 interaction. The interval 149-181 (LSEEAVEEANEGDNNALLHPICQHGVDDDHKQV) is binding to ATP6V1H. The Dileucine internalization motif; necessary for CD4 internalization motif lies at 165–166 (LL). The Diacidic; necessary for CD4 internalization motif lies at 175-176 (DD).

Belongs to the lentivirus primate group Nef protein family. Monomer; cytosolic form. Homodimer; membrane bound form. Interacts with Nef associated p21-activated kinase (PAK2); this interaction activates PAK2. Associates with the Nef-MHC-I-AP1 complex; this complex is required for MHC-I internalization. Interacts (via C-terminus) with host PI3-kinase. Interacts with host PACS1; this interaction seems to be weak. Interacts with host PACS2. Interacts with host LCK and MAPK3; these interactions inhibit the kinase activity of the latter. Interacts with host ATP6V1H; this interaction may play a role in CD4 endocytosis. Associates with the CD4-Nef-AP2 complex; this complex is required for CD4 internalization. Interacts with host AP2 subunit alpha and AP2 subunit sigma2. Interacts with TCR-zeta chain; this interaction up-regulates the Fas ligand (FasL) surface expression. Interacts with host HCK, LYN, and SRC; these interactions activate the Src family kinases. Interacts with MAP3K5; this interaction inhibits the Fas and TNFR-mediated death signals. Interacts with beta-COP and PTE1. Interacts with human RACK1; this increases Nef phosphorylation by PKC. Interacts with TP53; this interaction decreases the half-life of TP53, protecting the infected cell against p53-mediated apoptosis. In terms of processing, the virion-associated Nef proteins are cleaved by the viral protease to release the soluble C-terminal core protein. Nef is probably cleaved concomitantly with viral structural proteins on maturation of virus particles. Post-translationally, myristoylated. Phosphorylated on serine residues, probably by host PKCdelta and theta.

The protein localises to the host cell membrane. The protein resides in the virion. It localises to the secreted. Its subcellular location is the host Golgi apparatus membrane. Its function is as follows. Factor of infectivity and pathogenicity, required for optimal virus replication. Alters numerous pathways of T-lymphocyte function and down-regulates immunity surface molecules in order to evade host defense and increase viral infectivity. Alters the functionality of other immunity cells, like dendritic cells, monocytes/macrophages and NK cells. In terms of biological role, in infected CD4(+) T-lymphocytes, down-regulates the surface MHC-I, mature MHC-II, CD4, CD28, CCR5 and CXCR4 molecules. Mediates internalization and degradation of host CD4 through the interaction of with the cytoplasmic tail of CD4, the recruitment of AP-2 (clathrin adapter protein complex 2), internalization through clathrin coated pits, and subsequent transport to endosomes and lysosomes for degradation. Diverts host MHC-I molecules to the trans-Golgi network-associated endosomal compartments by an endocytic pathway to finally target them for degradation. MHC-I down-regulation may involve AP-1 (clathrin adapter protein complex 1) or possibly Src family kinase-ZAP70/Syk-PI3K cascade recruited by PACS2. In consequence infected cells are masked for immune recognition by cytotoxic T-lymphocytes. Decreasing the number of immune receptors also prevents reinfection by more HIV particles (superinfection). Down-regulates host SERINC3 and SERINC5 thereby excluding these proteins from the viral particles. Virion infectivity is drastically higher when SERINC3 or SERINC5 are excluded from the viral envelope, because these host antiviral proteins impair the membrane fusion event necessary for subsequent virion penetration. Functionally, bypasses host T-cell signaling by inducing a transcriptional program nearly identical to that of anti-CD3 cell activation. Interaction with TCR-zeta chain up-regulates the Fas ligand (FasL). Increasing surface FasL molecules and decreasing surface MHC-I molecules on infected CD4(+) cells send attacking cytotoxic CD8+ T-lymphocytes into apoptosis. Plays a role in optimizing the host cell environment for viral replication without causing cell death by apoptosis. Protects the infected cells from apoptosis in order to keep them alive until the next virus generation is ready to strike. Inhibits the Fas and TNFR-mediated death signals by blocking MAP3K5/ASK1. Decreases the half-life of TP53, protecting the infected cell against p53-mediated apoptosis. Inhibits the apoptotic signals regulated by the Bcl-2 family proteins through the formation of a Nef/PI3-kinase/PAK2 complex that leads to activation of PAK2 and induces phosphorylation of host BAD. Its function is as follows. Extracellular Nef protein targets CD4(+) T-lymphocytes for apoptosis by interacting with CXCR4 surface receptors. The sequence is that of Protein Nef from Homo sapiens (Human).